A 290-amino-acid chain; its full sequence is MRIADYSVTKAVLERHGFTFKKSFGQNFLTDTNILQKIVDTAEIDDQVNVIEIGPGIGALTEFLAERAAQVMAFEIDHRLVPILADTLRDFDNVTVVNEDILKVDLAQHIQNFKNPNLPIKVVANLPYYITTPILMHLIESGIPFCEFVVMMQKEVADRISAQPNTKAYGSLSIAVQYYMTAKVAFIVPRTVFVPAPNVDSAILKMVRRPEPAVAVEDENFFFKVSKASFTHRRKTLWNNLTGYFGKTEEVKDKLTKALDQAGLSPSVRGEALSLAEFAGLADALKGQGL.

6 residues coordinate S-adenosyl-L-methionine: N27, L29, G54, E75, D100, and N125.

This sequence belongs to the class I-like SAM-binding methyltransferase superfamily. rRNA adenine N(6)-methyltransferase family. RsmA subfamily.

The protein localises to the cytoplasm. It carries out the reaction adenosine(1518)/adenosine(1519) in 16S rRNA + 4 S-adenosyl-L-methionine = N(6)-dimethyladenosine(1518)/N(6)-dimethyladenosine(1519) in 16S rRNA + 4 S-adenosyl-L-homocysteine + 4 H(+). Specifically dimethylates two adjacent adenosines (A1518 and A1519) in the loop of a conserved hairpin near the 3'-end of 16S rRNA in the 30S particle. May play a critical role in biogenesis of 30S subunits. The protein is Ribosomal RNA small subunit methyltransferase A of Streptococcus pneumoniae (strain 70585).